The chain runs to 98 residues: Aspartyl/glutamyl-tRNA(Asn/Gln) amidotransferase subunit C (98 aa).

This sequence belongs to the GatC family. In terms of assembly, heterotrimer of A, B and C subunits.

The catalysed reaction is L-glutamyl-tRNA(Gln) + L-glutamine + ATP + H2O = L-glutaminyl-tRNA(Gln) + L-glutamate + ADP + phosphate + H(+). It carries out the reaction L-aspartyl-tRNA(Asn) + L-glutamine + ATP + H2O = L-asparaginyl-tRNA(Asn) + L-glutamate + ADP + phosphate + 2 H(+). Allows the formation of correctly charged Asn-tRNA(Asn) or Gln-tRNA(Gln) through the transamidation of misacylated Asp-tRNA(Asn) or Glu-tRNA(Gln) in organisms which lack either or both of asparaginyl-tRNA or glutaminyl-tRNA synthetases. The reaction takes place in the presence of glutamine and ATP through an activated phospho-Asp-tRNA(Asn) or phospho-Glu-tRNA(Gln). The chain is Aspartyl/glutamyl-tRNA(Asn/Gln) amidotransferase subunit C from Mycobacterium avium (strain 104).